We begin with the raw amino-acid sequence, 114 residues long: Gonadotropin subunit beta-1 (114 aa).

The first 19 residues, Met-1–Gly-19, serve as a signal peptide directing secretion. Cystine bridges form between Cys-20/Cys-66, Cys-32/Cys-80, Cys-37/Cys-114, Cys-43/Cys-92, Cys-47/Cys-94, and Cys-97/Cys-104. Residue Asn-24 is glycosylated (N-linked (GlcNAc...) asparagine).

It belongs to the glycoprotein hormones subunit beta family. Heterodimer of an alpha and a beta chain.

The protein resides in the secreted. Involved in gametogenesis and steroidogenesis. This chain is Gonadotropin subunit beta-1 (cgba), found in Fundulus heteroclitus (Killifish).